The chain runs to 284 residues: Pantothenate synthetase (284 aa).

30–37 (MGNLHDGH) serves as a coordination point for ATP. The active-site Proton donor is the H37. Q61 is a binding site for (R)-pantoate. Q61 provides a ligand contact to beta-alanine. Residue 149–152 (GEKD) participates in ATP binding. Q155 contacts (R)-pantoate. ATP-binding positions include I178 and 186-189 (LSSR).

It belongs to the pantothenate synthetase family. In terms of assembly, homodimer.

The protein resides in the cytoplasm. It carries out the reaction (R)-pantoate + beta-alanine + ATP = (R)-pantothenate + AMP + diphosphate + H(+). It functions in the pathway cofactor biosynthesis; (R)-pantothenate biosynthesis; (R)-pantothenate from (R)-pantoate and beta-alanine: step 1/1. Functionally, catalyzes the condensation of pantoate with beta-alanine in an ATP-dependent reaction via a pantoyl-adenylate intermediate. This is Pantothenate synthetase from Salmonella paratyphi B (strain ATCC BAA-1250 / SPB7).